A 145-amino-acid chain; its full sequence is Thioredoxin C-3 (145 aa).

Heme contacts are provided by C25, C28, and H29. The 112-residue stretch at 29–140 folds into the Thioredoxin domain; it reads HQALLPLEPI…LQQWLDQQLQ (112 aa). C65 and C68 form a disulfide bridge.

The protein belongs to the thioredoxin family.

In terms of biological role, participates in various redox reactions through the reversible oxidation of its active center dithiol to a disulfide and catalyzes dithiol-disulfide exchange reactions. The sequence is that of Thioredoxin C-3 from Corynebacterium nephridii.